Reading from the N-terminus, the 193-residue chain is Large ribosomal subunit protein bL25 (193 aa).

This sequence belongs to the bacterial ribosomal protein bL25 family. CTC subfamily. As to quaternary structure, part of the 50S ribosomal subunit; part of the 5S rRNA/L5/L18/L25 subcomplex. Contacts the 5S rRNA. Binds to the 5S rRNA independently of L5 and L18.

In terms of biological role, this is one of the proteins that binds to the 5S RNA in the ribosome where it forms part of the central protuberance. The polypeptide is Large ribosomal subunit protein bL25 (Hydrogenovibrio crunogenus (strain DSM 25203 / XCL-2) (Thiomicrospira crunogena)).